Reading from the N-terminus, the 125-residue chain is Holo-[acyl-carrier-protein] synthase (125 aa).

The Mg(2+) site is built by Asp8 and Glu57.

The protein belongs to the P-Pant transferase superfamily. AcpS family. Mg(2+) serves as cofactor.

The protein localises to the cytoplasm. It catalyses the reaction apo-[ACP] + CoA = holo-[ACP] + adenosine 3',5'-bisphosphate + H(+). Functionally, transfers the 4'-phosphopantetheine moiety from coenzyme A to a Ser of acyl-carrier-protein. The protein is Holo-[acyl-carrier-protein] synthase of Natranaerobius thermophilus (strain ATCC BAA-1301 / DSM 18059 / JW/NM-WN-LF).